The following is a 234-amino-acid chain: Cyclo(L-leucyl-L-leucyl) synthase (234 aa).

Ser28 functions as the Nucleophile in the catalytic mechanism. Residues 171–175 (YVLAE), Tyr195, and 200–201 (EL) each bind substrate.

Belongs to the CDPS family.

It carries out the reaction 2 L-leucyl-tRNA(Leu) = cyclo(L-leucyl-L-leucyl) + 2 tRNA(Leu) + 2 H(+). Its function is as follows. It uses activated amino acids in the form of aminoacyl-tRNAs (aa-tRNAs) as substrates to catalyze the ATP-independent formation of cyclodipeptides which are intermediates in diketopiperazine (DKP) biosynthetic pathways. Catalyzes the formation of cyclo(L-Leu-L-Leu) (cLL) from L-leucyl-tRNA(Leu). Can incorporate various nonpolar residues, such as L-phenylalanine, L-leucine and L-methionine, into cyclodipeptides. This chain is Cyclo(L-leucyl-L-leucyl) synthase, found in Staphylococcus haemolyticus (strain JCSC1435).